The following is a 200-amino-acid chain: LHFPL tetraspan subfamily member 7 protein (200 aa).

Transmembrane regions (helical) follow at residues 5 to 27 (VWVALGLSLTCTSAFSLISPAWF), 68 to 88 (VSAVMLLGGWLLLAFNAIFLL), 113 to 133 (AATAMIVGLLIFPIGLASPFI), and 150 to 170 (LGWGYMTAILNAVLASLLPII).

This sequence belongs to the TMEM211 family.

It localises to the membrane. The chain is LHFPL tetraspan subfamily member 7 protein from Homo sapiens (Human).